The sequence spans 306 residues: Protoheme IX farnesyltransferase (306 aa).

Helical transmembrane passes span 31–50 (VIELLLVTTAPVMILAQGGW), 55–77 (LILGVLVGGTLSAGSANAFNCYI), 104–124 (LVFAWIIGVASIVWLGVISNW), 125–145 (LAAALSLAAILFYVFVYTLWL), 168–188 (WAAVTGDISWAPVILFMIVFL), 218–235 (GRAAVGLQTILYAWATLA), 238–258 (LLLIPVAGMGLVYTLAALAGG), and 286–306 (ASISYLSLLFLAVGIDPLLPF).

The protein belongs to the UbiA prenyltransferase family. Protoheme IX farnesyltransferase subfamily.

The protein localises to the cell membrane. It catalyses the reaction heme b + (2E,6E)-farnesyl diphosphate + H2O = Fe(II)-heme o + diphosphate. It functions in the pathway porphyrin-containing compound metabolism; heme O biosynthesis; heme O from protoheme: step 1/1. Its function is as follows. Converts heme B (protoheme IX) to heme O by substitution of the vinyl group on carbon 2 of heme B porphyrin ring with a hydroxyethyl farnesyl side group. The protein is Protoheme IX farnesyltransferase of Clavibacter michiganensis subsp. michiganensis (strain NCPPB 382).